We begin with the raw amino-acid sequence, 505 residues long: ATP synthase subunit alpha (505 aa).

Gly-171–Thr-178 contributes to the ATP binding site.

It belongs to the ATPase alpha/beta chains family. As to quaternary structure, F-type ATPases have 2 components, CF(1) - the catalytic core - and CF(0) - the membrane proton channel. CF(1) has five subunits: alpha(3), beta(3), gamma(1), delta(1), epsilon(1). CF(0) has three main subunits: a(1), b(2) and c(9-12). The alpha and beta chains form an alternating ring which encloses part of the gamma chain. CF(1) is attached to CF(0) by a central stalk formed by the gamma and epsilon chains, while a peripheral stalk is formed by the delta and b chains.

It is found in the cell inner membrane. The catalysed reaction is ATP + H2O + 4 H(+)(in) = ADP + phosphate + 5 H(+)(out). Functionally, produces ATP from ADP in the presence of a proton gradient across the membrane. The alpha chain is a regulatory subunit. In Aliarcobacter butzleri (strain RM4018) (Arcobacter butzleri), this protein is ATP synthase subunit alpha.